Here is a 111-residue protein sequence, read N- to C-terminus: Ig kappa chain V-III region PC 3741/TEPC 111 (111 aa).

The segment at 1–23 (DIVLTQSPASLAVSLGQRATISC) is framework-1. Cys23 and Cys92 are oxidised to a cystine. The complementarity-determining-1 stretch occupies residues 24-38 (RASESVDSYGNSFMH). The segment at 39 to 53 (WYQQKPGQPPKLLIY) is framework-2. Residues 54 to 60 (RASNLES) are complementarity-determining-2. The segment at 61-92 (GIPARFSGSGSRTDFTLTINPVEADDVATYYC) is framework-3. Positions 93–101 (QQSNEDPYT) are complementarity-determining-3. Residues 102–111 (FGGGTKLEIK) form a framework-4 region.

This is Ig kappa chain V-III region PC 3741/TEPC 111 from Mus musculus (Mouse).